We begin with the raw amino-acid sequence, 155 residues long: Protein FAM201A (155 aa).

The interval 130-155 (QDQGCGQHRPHSPRLVDIALPGGGWT) is disordered.

This chain is Protein FAM201A (FAM201A), found in Homo sapiens (Human).